We begin with the raw amino-acid sequence, 43 residues long: Avenin-F (43 aa).

The disordered stretch occupies residues 1–23 (TTTVQYDPSEQYQPYPEQQEPFV). Residues 10–23 (EQYQPYPEQQEPFV) show a composition bias toward low complexity. Residues 21–26 (PFVQQQ) form repeat 1. Residues 21–40 (PFVQQQPPFVQQQQPFVQQQ) form a 3 X 6 aa tandem repeats of P-F-V-Q-Q-Q region. The 2; approximate repeat unit spans residues 27 to 34 (PPFVQQQQ). The stretch at 35 to 40 (PFVQQQ) is repeat 3.

It belongs to the gliadin/glutenin family. Monomer.

It is found in the vacuole. The protein localises to the aleurone grain. In terms of biological role, seed storage protein. Serves as a source of nitrogen, carbon, and sulfur for the young developing seedling. In Avena sativa (Oat), this protein is Avenin-F.